The chain runs to 279 residues: Large ribosomal subunit protein uL2 (279 aa).

The tract at residues 223–279 is disordered; that stretch reads MAMNPVDHPMGGGEGKSKSGGGRKHPKSPWGQLAKGLKTRNKKKASTKLIVRGRKAK. Residues 232–242 are compositionally biased toward gly residues; sequence MGGGEGKSKSG. The span at 259–279 shows a compositional bias: basic residues; sequence LKTRNKKKASTKLIVRGRKAK.

The protein belongs to the universal ribosomal protein uL2 family. Part of the 50S ribosomal subunit. Forms a bridge to the 30S subunit in the 70S ribosome.

Functionally, one of the primary rRNA binding proteins. Required for association of the 30S and 50S subunits to form the 70S ribosome, for tRNA binding and peptide bond formation. It has been suggested to have peptidyltransferase activity; this is somewhat controversial. Makes several contacts with the 16S rRNA in the 70S ribosome. This Chlorobaculum tepidum (strain ATCC 49652 / DSM 12025 / NBRC 103806 / TLS) (Chlorobium tepidum) protein is Large ribosomal subunit protein uL2.